Here is a 304-residue protein sequence, read N- to C-terminus: UPF0282 protein TSIB_1029 (304 aa).

The protein belongs to the UPF0282 family.

This is UPF0282 protein TSIB_1029 from Thermococcus sibiricus (strain DSM 12597 / MM 739).